Consider the following 127-residue polypeptide: Major sperm protein 152 (127 aa).

T2 carries the post-translational modification N-acetylthreonine. The 118-residue stretch at 9–126 (DIQTQPGTKI…RRKNLPIEYN (118 aa)) folds into the MSP domain.

As to expression, sperm.

It localises to the cell projection. Its subcellular location is the pseudopodium. It is found in the cytoplasm. The protein localises to the cytoskeleton. In terms of biological role, central component in molecular interactions underlying sperm crawling. Forms an extensive filament system that extends from sperm villipoda, along the leading edge of the pseudopod. In Caenorhabditis elegans, this protein is Major sperm protein 152 (msp-152).